The following is a 313-amino-acid chain: Protein MFI (313 aa).

In terms of assembly, can homodimerize. Interacts with MFF; the interaction inhibits MFF interaction with DNM1L. Enriched in the pancreatic beta cell and the testis and is expressed at low levels in other tissues tested.

Its subcellular location is the cytoplasm. The protein resides in the cytosol. It localises to the mitochondrion outer membrane. Its function is as follows. Acts as an inhibitor of mitochondrial fission. Interacts with MFF and prevents DNM1L recruitment to mitochondria, promoting a more fused mitochondrial network. The polypeptide is Protein MFI (Homo sapiens (Human)).